Consider the following 356-residue polypeptide: MFKSLVRKSSAFQPLKYGGKYTVTLIPGDGIGRETSNAVTEIFKTANVPIEFEEIDVTGMEKNNKSSGDALHEAIQSLKRNKVGLKGILFTPFEKGGHTSFNVALRKELDIYASLVLIKNIPGFKTRHDNVDFAIIRENTEGEYSGLEHQSVPGVVESLKIITEYKSKRIAQFAFDFALQNGRKSVTCIHKANIMKLADGLFRRTFYDVANGYDAITPKDLIVDNASMQAVSRPQQFDVLVMPNLYGSILSNIGSALVGGPGVIPGANFGRDYALFEPGCRHVGLSITGRGEANPTAAILSACLMLRHLGLKDYADLINAATYSVIEEGKTLTKDLGGSASTGDFTHAILERMESL.

The substrate site is built by R106, R137, and D224. Position 224 (D224) interacts with Mg(2+).

It belongs to the isocitrate and isopropylmalate dehydrogenases family. As to quaternary structure, octamer of two non-identical subunits IDH1 and IDH2. Mg(2+) serves as cofactor. Requires Mn(2+) as cofactor.

The protein resides in the mitochondrion. The catalysed reaction is D-threo-isocitrate + NAD(+) = 2-oxoglutarate + CO2 + NADH. Its function is as follows. Performs an essential role in the oxidative function of the citric acid cycle. Also binds RNA; specifically to the 5'-untranslated leaders of mitochondrial mRNAs. In Schizosaccharomyces pombe (strain 972 / ATCC 24843) (Fission yeast), this protein is Isocitrate dehydrogenase [NAD] subunit 1, mitochondrial (idh1).